A 408-amino-acid polypeptide reads, in one-letter code: Acetate kinase (408 aa).

Asn-7 is a Mg(2+) binding site. Lys-14 serves as a coordination point for ATP. Arg-91 lines the substrate pocket. Catalysis depends on Asp-148, which acts as the Proton donor/acceptor. Residues 208–212 and 283–285 each bind ATP; these read HLGNG and DLR. Glu-388 lines the Mg(2+) pocket.

It belongs to the acetokinase family. In terms of assembly, homodimer. Mg(2+) is required as a cofactor. Mn(2+) serves as cofactor.

Its subcellular location is the cytoplasm. It carries out the reaction acetate + ATP = acetyl phosphate + ADP. It participates in metabolic intermediate biosynthesis; acetyl-CoA biosynthesis; acetyl-CoA from acetate: step 1/2. Functionally, catalyzes the formation of acetyl phosphate from acetate and ATP. Can also catalyze the reverse reaction. In Borrelia hermsii (strain HS1 / DAH), this protein is Acetate kinase.